A 197-amino-acid polypeptide reads, in one-letter code: Elongation factor Ts (197 aa).

The interval 81-84 (TDFV) is involved in Mg(2+) ion dislocation from EF-Tu.

Belongs to the EF-Ts family.

It is found in the cytoplasm. In terms of biological role, associates with the EF-Tu.GDP complex and induces the exchange of GDP to GTP. It remains bound to the aminoacyl-tRNA.EF-Tu.GTP complex up to the GTP hydrolysis stage on the ribosome. The polypeptide is Elongation factor Ts (Thermotoga neapolitana (strain ATCC 49049 / DSM 4359 / NBRC 107923 / NS-E)).